A 155-amino-acid chain; its full sequence is MLKPDSLRRALTDAVTVLKTNPDMLRIFVDNGSIASTLAASLSFEKRYTLNVIVTDFTGDFDLLIVPVLAWLRENQPDIMTTDEGQKKGFTFYADINNDSSFDISISLMLTERTLVSEVDGALHVKNISEPPPPEPVTRPMELYINGELVSKWDE.

It to phage T4 tail protein GP15.

It is proposed that R and S are tail completion proteins that are essential for stable head joining. The protein is Tail completion protein R (R) of Enterobacteriaceae (Bacteriophage P2).